Here is a 130-residue protein sequence, read N- to C-terminus: Large ribosomal subunit protein bL17 (130 aa).

This sequence belongs to the bacterial ribosomal protein bL17 family. In terms of assembly, part of the 50S ribosomal subunit. Contacts protein L32.

The chain is Large ribosomal subunit protein bL17 from Nitrosomonas europaea (strain ATCC 19718 / CIP 103999 / KCTC 2705 / NBRC 14298).